The following is a 211-amino-acid chain: GTP pyrophosphokinase YjbM (211 aa).

Residues 21 to 28 (KVKLKGIR), 41 to 42 (EF), and 46 to 48 (RVK) each bind guanosine 3'-diphosphate 5'-triphosphate. Residues 46-48 (RVK), serine 52, 56-59 (KARR), aspartate 72, and arginine 77 each bind ATP. Arginine 59 contacts guanosine 3'-diphosphate 5'-triphosphate. A Mg(2+)-binding site is contributed by aspartate 72. Residues arginine 105, 112–114 (KES), and histidine 120 contribute to the guanosine 3'-diphosphate 5'-triphosphate site. Glutamate 139 functions as the Proton acceptor in the catalytic mechanism. Guanosine 3'-diphosphate 5'-triphosphate is bound by residues asparagine 148 and 151 to 155 (ATIEH).

It belongs to the RelA/SpoT family. In terms of assembly, homotetramer.

It carries out the reaction GTP + ATP = guanosine 3'-diphosphate 5'-triphosphate + AMP. It catalyses the reaction GDP + ATP = guanosine 3',5'-bis(diphosphate) + AMP. Its pathway is purine metabolism; ppGpp biosynthesis; ppGpp from GTP: step 1/2. Its activity is regulated as follows. Allosterically regulated by its own products; pppGpp simulates synthesis 10-fold more than ppGpp. 2 pppGpp molecules bind in a regulatory cleft in the middle of the tetramer in an asymmetric manner. There is a specific contact of Lys-25 to the gamma-phosphate of pppGpp, explaining why pppGpp stimulates activity but ppGpp does not. Functions as a (p)ppGpp synthase; GDP can be used instead of GTP, resulting in an increase of (p)ppGpp synthesis. The enzyme binds ATP, then GDP or GTP and catalysis is highly cooperative. In eubacteria ppGpp (guanosine 3'-diphosphate 5'-diphosphate) is a mediator of the stringent response that coordinates a variety of cellular activities in response to changes in nutritional abundance. Probably has a minor role in the stringent response. This is GTP pyrophosphokinase YjbM (yjbM) from Bacillus subtilis (strain 168).